The chain runs to 339 residues: Alpha-N-dichloroacetyl-p-aminophenylserinol N-oxygenase (339 aa).

The segment covering 1–19 (MRDHTDEKSEAAGNDDGHV) has biased composition (basic and acidic residues). A disordered region spans residues 1-22 (MRDHTDEKSEAAGNDDGHVRIG). Fe cation is bound by residues Glu109, Glu144, His147, Glu205, His232, Glu236, and His239.

The protein belongs to the AurF N-oxygenase family. Fe(2+) is required as a cofactor.

The catalysed reaction is alpha-N-dichloroacetyl-p-aminophenylserinol + AH2 + 2 O2 = chloramphenicol + A + 2 H2O. It participates in antibiotic biosynthesis. Its function is as follows. Involved in chloramphenicol biosynthesis. Catalyzes the six-electron oxidation of an aryl-amine precursor of chloramphenicol (NH2-CAM) to yield the aryl-nitro group of chloramphenicol (CAM). During catalysis, upon exposure of the diferrous cluster to O(2), ClmI forms an exceptionally long-lived peroxo intermediate (CmlI-peroxo), which reacts with NH2-CAM to form CAM. This Streptomyces venezuelae (strain ATCC 10712 / CBS 650.69 / DSM 40230 / JCM 4526 / NBRC 13096 / PD 04745) protein is Alpha-N-dichloroacetyl-p-aminophenylserinol N-oxygenase.